A 533-amino-acid polypeptide reads, in one-letter code: Capsid protein VP1 (533 aa).

The disordered stretch occupies residues 333–353 (TIDLQQNPVPQTSSSTTDSPQ).

Belongs to the microviridae F protein family.

The protein resides in the virion. It is found in the host cytoplasm. Its function is as follows. Assembles to form an icosahedral capsid with a T=1 symmetry. In Bdellovibrio bacteriovorus (Bacteriophage phiMH2K), this protein is Capsid protein VP1.